A 378-amino-acid chain; its full sequence is TelA-like protein SAUSA300_1299 (378 aa).

The protein belongs to the TelA family.

This is TelA-like protein SAUSA300_1299 from Staphylococcus aureus (strain USA300).